A 105-amino-acid polypeptide reads, in one-letter code: Small ribosomal subunit protein uS10 (105 aa).

This sequence belongs to the universal ribosomal protein uS10 family. In terms of assembly, part of the 30S ribosomal subunit.

In terms of biological role, involved in the binding of tRNA to the ribosomes. This chain is Small ribosomal subunit protein uS10, found in Synechocystis sp. (strain ATCC 27184 / PCC 6803 / Kazusa).